A 748-amino-acid polypeptide reads, in one-letter code: Disintegrin and metalloproteinase domain-containing protein 10 (748 aa).

Positions 1–19 (MVLLRVLILLLSWVAGLGG) are cleaved as a signal peptide. A propeptide spanning residues 20–213 (QYGNPLNKYI…NGPELLRKKR (194 aa)) is cleaved from the precursor. Residues 20–672 (QYGNPLNKYI…SPELYENIAE (653 aa)) are Extracellular-facing. The short motif at 171–178 (GGCADHSV) is the Cysteine switch element. Zn(2+) is bound at residue C173. One can recognise a Peptidase M12B domain in the interval 220 to 456 (NTCQLYIQTD…KRNNCFVESG (237 aa)). N-linked (GlcNAc...) asparagine glycans are attached at residues N267 and N278. 16 disulfide bridges follow: C344–C451, C399–C435, C460–C495, C471–C484, C473–C479, C483–C515, C503–C511, C510–C536, C524–C543, C530–C562, C555–C567, C572–C598, C580–C607, C582–C597, C594–C639, and C632–C645. Residue H383 participates in Zn(2+) binding. Residue E384 is part of the active site. H387 and H393 together coordinate Zn(2+). Residue N439 is glycosylated (N-linked (GlcNAc...) asparagine). The 95-residue stretch at 457-551 (QPICGNGMVE…LCPASDPKPN (95 aa)) folds into the Disintegrin domain. The N-linked (GlcNAc...) asparagine glycan is linked to N551. Residues 673-696 (WIVAYWWAVLLMGIALIMLMAGFI) form a helical membrane-spanning segment. Residues 697-748 (KICSVHTPSSNPKLPPPKPLPGTLKRRRPPQPIQQPQRQRPRESYQMGHMRR) lie on the Cytoplasmic side of the membrane. Residues 704–748 (PSSNPKLPPPKPLPGTLKRRRPPQPIQQPQRQRPRESYQMGHMRR) are disordered. An SH3-binding motif is present at residues 708–715 (PKLPPPKP). The residue at position 719 (T719) is a Phosphothreonine. Positions 722-728 (RRRPPQP) match the SH3-binding motif. Residues 734–748 (RQRPRESYQMGHMRR) are interaction with AP2A1, AP2A2 and AP2M1.

Forms a ternary EFNA5-EPHA3-ADAM10 complex mediating EFNA5 extracellular domain shedding by ADAM10 which regulates the EFNA5-EPHA3 complex internalization and function, the cleavage occurs in trans, with ADAM10 and its substrate being on the membranes of opposing cells. Interacts with the clathrin adapter AP2 complex subunits AP2A1, AP2A2, AP2B1, and AP2M1; this interaction facilitates ADAM10 endocytosis from the plasma membrane during long-term potentiation in hippocampal neurons. Forms a ternary complex composed of ADAM10, EPHA4 and CADH1; within the complex, ADAM10 cleaves CADH1 which disrupts adherens junctions. Interacts with EPHA2. Interacts with NGF in a divalent cation-dependent manner. Interacts with TSPAN14; the interaction promotes ADAM10 maturation and cell surface expression. Interacts with TSPAN5, TSPAN10, TSPAN14, TSPAN15, TSPAN17 and TSPAN33; these interactions regulate ADAM10 substrate specificity, endocytosis and turnover. Interacts (via extracellular domain) with TSPAN33 (via extracellular domain) and (via cytoplasmic domain) with AFDN; interaction with TSPAN33 allows the docking of ADAM10 to zonula adherens through a PDZ11-dependent interaction between TSPAN33 and PLEKHA7 while interaction with AFDN locks ADAM10 at zonula adherens. Interacts with DLG1; this interaction recruits ADAM10 to the cell membrane during long-term depression in hippocampal neurons. Interacts (via extracellular domain) with BACE1 (via extracellular domain). Interacts with FAM171A1. The cofactor is Zn(2+). Post-translationally, the precursor is cleaved by furin and PCSK7. In terms of tissue distribution, expressed at low level in kidney, spleen, lung, adrenal, heart and peripheral nerve.

It localises to the golgi apparatus membrane. The protein resides in the cell membrane. It is found in the cytoplasmic vesicle. Its subcellular location is the clathrin-coated vesicle. The protein localises to the cell projection. It localises to the axon. The protein resides in the dendrite. It is found in the cell junction. Its subcellular location is the adherens junction. The protein localises to the cytoplasm. The enzyme catalyses Endopeptidase of broad specificity.. Catalytically inactive when the propeptide is intact and associated with the mature enzyme. The disintegrin and cysteine-rich regions modulate access of substrates to exerts an inhibitory effect on the cleavage of ADAM10 substrates. Transmembrane metalloprotease which mediates the ectodomain shedding of a myriad of transmembrane proteins, including adhesion proteins, growth factor precursors and cytokines being essential for development and tissue homeostasis. Associates with six members of the tetraspanin superfamily TspanC8 which regulate its exit from the endoplasmic reticulum and its substrate selectivity. Cleaves the membrane-bound precursor of TNF-alpha at '76-Ala-|-Val-77' to its mature soluble form. Responsible for the proteolytical release of soluble JAM3 from endothelial cells surface. Responsible for the proteolytic release of several other cell-surface proteins, including heparin-binding epidermal growth-like factor, ephrin-A2, CD44, CDH2 and for constitutive and regulated alpha-secretase cleavage of amyloid precursor protein (APP). Contributes to the normal cleavage of the cellular prion protein. Involved in the cleavage of the adhesion molecule L1 at the cell surface and in released membrane vesicles, suggesting a vesicle-based protease activity. Also controls the proteolytic processing of Notch and mediates lateral inhibition during neurogenesis. Required for the development of type 1 transitional B cells into marginal zone B cells, probably by cleaving Notch. Responsible for the FasL ectodomain shedding and for the generation of the remnant ADAM10-processed FasL (FasL APL) transmembrane form. Also cleaves the ectodomain of the integral membrane proteins CORIN and ITM2B. Mediates the proteolytic cleavage of LAG3, leading to release the secreted form of LAG3. Mediates the proteolytic cleavage of IL6R and IL11RA, leading to the release of secreted forms of IL6R and IL11RA. Enhances the cleavage of CHL1 by BACE1. Cleaves NRCAM. Cleaves TREM2, resulting in shedding of the TREM2 ectodomain. Involved in the development and maturation of glomerular and coronary vasculature. During development of the cochlear organ of Corti, promotes pillar cell separation by forming a ternary complex with CADH1 and EPHA4 and cleaving CADH1 at adherens junctions. May regulate the EFNA5-EPHA3 signaling. Regulates leukocyte transmigration as a sheddase for the adherens junction protein VE-cadherin/CDH5 in endothelial cells. This Bos taurus (Bovine) protein is Disintegrin and metalloproteinase domain-containing protein 10 (ADAM10).